Reading from the N-terminus, the 1333-residue chain is Inner capsid protein VP1 (1333 aa).

Residues 1–10 (MHSTTNNSNK) are compositionally biased toward polar residues. The segment at 1–93 (MHSTTNNSNK…MDMEKAAETT (93 aa)) is disordered. Positions 11–20 (RNNEEKHKQP) are enriched in basic and acidic residues. Over residues 64–82 (DGASRSGTNAKVATASSAR) the composition is skewed to polar residues.

It belongs to the turreted BTV-fold inner capsid family. Homodecamer; each decamer is made up of two conformers of VP2, called VP2A and VP2B. 12 homodecamers assemble to form an icosahedral capsid.

It is found in the virion. Its function is as follows. Inner capsid protein that self-assembles to form an icosahedral capsid with a T=2 symmetry, which consists of 120 copies of VP2, with channels at each of its five-fold vertices. This capsid constitutes the innermost concentric layer of the viral mature particle. In Lymantria dispar cypovirus 1 (isolate Rao) (LdCPV-1), this protein is Inner capsid protein VP1 (S1).